A 225-amino-acid chain; its full sequence is Small ribosomal subunit protein uS3 (225 aa).

One can recognise a KH type-2 domain in the interval L38–R106.

The protein belongs to the universal ribosomal protein uS3 family. In terms of assembly, part of the 30S ribosomal subunit. Forms a tight complex with proteins S10 and S14.

Its function is as follows. Binds the lower part of the 30S subunit head. Binds mRNA in the 70S ribosome, positioning it for translation. The polypeptide is Small ribosomal subunit protein uS3 (Rhodospirillum centenum (strain ATCC 51521 / SW)).